Consider the following 475-residue polypeptide: Ribulose bisphosphate carboxylase large chain (475 aa).

A propeptide spanning residues 1-2 (MS) is cleaved from the precursor. Position 3 is an N-acetylproline (proline 3). Lysine 14 is modified (N6,N6,N6-trimethyllysine). Substrate is bound by residues asparagine 123 and threonine 173. Catalysis depends on lysine 175, which acts as the Proton acceptor. Lysine 177 is a binding site for substrate. 3 residues coordinate Mg(2+): lysine 201, aspartate 203, and glutamate 204. An N6-carboxylysine modification is found at lysine 201. The Proton acceptor role is filled by histidine 294. Substrate-binding residues include arginine 295, histidine 327, and serine 379.

This sequence belongs to the RuBisCO large chain family. Type I subfamily. Heterohexadecamer of 8 large chains and 8 small chains; disulfide-linked. The disulfide link is formed within the large subunit homodimers. It depends on Mg(2+) as a cofactor. The disulfide bond which can form in the large chain dimeric partners within the hexadecamer appears to be associated with oxidative stress and protein turnover.

It is found in the plastid. Its subcellular location is the chloroplast. The catalysed reaction is 2 (2R)-3-phosphoglycerate + 2 H(+) = D-ribulose 1,5-bisphosphate + CO2 + H2O. It catalyses the reaction D-ribulose 1,5-bisphosphate + O2 = 2-phosphoglycolate + (2R)-3-phosphoglycerate + 2 H(+). Its function is as follows. RuBisCO catalyzes two reactions: the carboxylation of D-ribulose 1,5-bisphosphate, the primary event in carbon dioxide fixation, as well as the oxidative fragmentation of the pentose substrate in the photorespiration process. Both reactions occur simultaneously and in competition at the same active site. This chain is Ribulose bisphosphate carboxylase large chain, found in Corylus cornuta (Beaked hazel).